We begin with the raw amino-acid sequence, 883 residues long: N,N'-diacetylchitobiase (883 aa).

The first 17 residues, 1–17 (MLKHSLIAASVITTLAG), serve as a signal peptide directing secretion. Cys-18 carries N-palmitoyl cysteine lipidation. Residue Cys-18 is the site of S-diacylglycerol cysteine attachment. 3 disulfide bridges follow: Cys-54/Cys-64, Cys-394/Cys-402, and Cys-502/Cys-577. Glu-537 acts as the Proton donor in catalysis.

It belongs to the glycosyl hydrolase 20 family. In terms of processing, this protein is probably a lipoprotein, its processing is inhibited by globomycin.

The protein localises to the cell outer membrane. The enzyme catalyses Hydrolysis of terminal non-reducing N-acetyl-D-hexosamine residues in N-acetyl-beta-D-hexosaminides.. Its pathway is glycan degradation; chitin degradation. In terms of biological role, hydrolysis of terminal, non-reducing N-acetyl-beta-D-glucosamine residues in chitobiose and higher analogs, and in glycoproteins. This Vibrio harveyi (Beneckea harveyi) protein is N,N'-diacetylchitobiase (chb).